We begin with the raw amino-acid sequence, 525 residues long: Histidine-rich glycoprotein (525 aa).

The signal sequence occupies residues 1–18 (MKVLTTALLLVTLQCSHA). Residues 19-122 (LSPTNCDASK…ESQDLSVNGY (104 aa)) enclose the Cystatin 1 domain. Disulfide bonds link Cys-24/Cys-504, Cys-78/Cys-89, Cys-103/Cys-124, Cys-201/Cys-414, and Cys-216/Cys-239. The tract at residues 41 to 84 (GRRSGYTFQLLRVSDAHLDRVETATIYYLVLDVVESDCWVLSTK) is interaction with ATP5F1A. N-linked (GlcNAc...) asparagine glycans are attached at residues Asn-112 and Asn-123. A Cystatin 2 domain is found at 135 to 240 (NTKDSPVLVD…TPEYTDLICE (106 aa)). Ser-145 carries the post-translational modification Phosphoserine. Asn-200 is a glycosylation site (N-linked (GlcNAc...) asparagine). The tract at residues 275 to 445 (RDHHHTHKTH…GHSRKRGPGK (171 aa)) is disordered. N-linked (GlcNAc...) asparagine glycosylation is found at Asn-322 and Asn-330. Basic residues-rich tracts occupy residues 339-392 (HGQH…HGHH) and 426-443 (QYHR…KRGP). Ser-438 is subject to Phosphoserine.

As to quaternary structure, interacts with THBS1 (via the TSP type I repeats); the interaction blocks the antiangiogenic effect of THBS1 with CD36. Interacts with HPSE; the interaction is enhanced at acidic pH, partially inhibits binding of HPSE to cell surface receptors and modulates its enzymatic activity. Interacts (via the HRR domain) with TMP1; the interaction partially mediates the antiangiogenic properties of HRG. Interacts with kappa and lambda light chains of IgG molecules. Interacts with ATP5F1A; the interaction occurs on the surface of T-cells and alters their cell morphology in concert with CONA. Binds IgG molecules containing kappa and lambda light chains and inhibits the formation of insoluble immunoglobulin complexes. Interacts with F12; the interaction, which is enhanced in the presence of zinc ions and inhibited by heparin-binding to HRG, inhibits factor XII autoactivation and contact-initiated coagulation. Interacts with PLG (via its Kringle domains); the interaction tethers PLG to the cell surface and enhances its activation. Interacts (via the HRR domain) with TPM1; the interaction appears to contribute to the antiangiogenic properties of the HRR domain. Interacts with THBS2; the interaction blocks the antiangiogenic effect of THBS2 with CD36. Post-translationally, N-glycosylated. Proteolytic cleavage produces several HRG fragments which are mostly disulfide-linked and, therefore, not released. Cleavage by plasmin is inhibited in the presence of heparin, zinc ions or in an acidic environment. Cleavage reduces binding of HRG to heparan sulfate, but enhances the ability of HRG to bind and tether plasminogen to the cell surface. On platelet activation, releases a 33 kDa antiangiogenic peptide which encompasses the HRR. Also cleaved in the C-terminal by plasmin. In terms of tissue distribution, expressed in liver, blood plasma, serum and in platelets. Also present in fibrin clots, wound fluid from acute wounds and chronic leg ulcers.

It is found in the secreted. In terms of biological role, plasma glycoprotein that binds a number of ligands such as heme, heparin, heparan sulfate, thrombospondin, plasminogen, and divalent metal ions. Inhibits rosette formation. Acts as an adapter protein and implicated in regulating many processes such as immune complex and pathogen clearance, cell adhesion, angiogenesis, coagulation and fibrinolysis. Mediates clearance of necrotic cells through enhancing the phagocytosis of necrotic cells in a heparan sulfate-dependent pathway. This process can be regulated by the presence of certain HRG ligands such as heparin and zinc ions. Binds to IgG subclasses of immunoglobins containing kappa and lambda light chains with different affinities regulating their clearance and inhibiting the formation of insoluble immune complexes. Tethers plasminogen to the cell surface. Binds T-cells and alters the cell morphology. Modulates angiogenesis by blocking the CD6-mediated antiangiongenic effect of thrombospondins, THBS1 and THBS2. This chain is Histidine-rich glycoprotein (Hrg), found in Rattus norvegicus (Rat).